Reading from the N-terminus, the 1895-residue chain is 1,3-beta-glucan synthase component GSC2 (1895 aa).

Polar residues-rich tracts occupy residues 1-16 (MSYN…YSNG) and 25-34 (PTYQVTQDQS). Disordered regions lie at residues 1–143 (MSYN…PYGN) and 269–292 (ARKA…EETL). Residues 1 to 473 (MSYNDPNLNG…WLHLVTNFNR (473 aa)) lie on the Extracellular side of the membrane. Low complexity predominate over residues 65–78 (QFPQGQDPSQDQGP). 2 stretches are compositionally biased toward polar residues: residues 79–107 (YNND…SDFS) and 115–141 (TYPN…STPY). Over residues 269 to 278 (ARKAKKKNKK) the composition is skewed to basic residues. A Glycyl lysine isopeptide (Lys-Gly) (interchain with G-Cter in ubiquitin) cross-link involves residue Lys278. 2 positions are modified to phosphothreonine: Thr288 and Thr291. Residue Lys405 forms a Glycyl lysine isopeptide (Lys-Gly) (interchain with G-Cter in ubiquitin) linkage. The helical transmembrane segment at 474 to 494 (IWIMHISVYWMYCAYNAPTFY) threads the bilayer. The Cytoplasmic segment spans residues 495 to 511 (THNYQQLVDNQPLAAYK). Residues 512–532 (WATAALGGTVASLIQVAATLC) traverse the membrane as a helical segment. The Extracellular portion of the chain corresponds to 533-550 (EWSFVPRKWAGAQHLSRR). The chain crosses the membrane as a helical span at residues 551–571 (FWFLCVIMGINLGPVIFVFAY). Residues 572 to 582 (DKDTVYSTAAH) are Cytoplasmic-facing. The helical transmembrane segment at 583 to 603 (VVGAVMFFVAVATLVFFSVMP) threads the bilayer. At 604-1579 (LGGLFTSYMK…DASRAHRTNL (976 aa)) the chain is on the extracellular side. Residues Lys929, Lys934, Lys1558, and Lys1566 each participate in a glycyl lysine isopeptide (Lys-Gly) (interchain with G-Cter in ubiquitin) cross-link. Residues 1580–1600 (IMAEIIPCAIYAAGCFIAFTF) traverse the membrane as a helical segment. Residues 1601 to 1620 (INAQTGVKTTDEDRVNSTLR) lie on the Cytoplasmic side of the membrane. A helical transmembrane segment spans residues 1621 to 1641 (IIICTLAPIVIDIGVLFFCMG). Over 1642 to 1758 (LSCCSGPLLG…LTAKVIELSE (117 aa)) the chain is Extracellular. A helical transmembrane segment spans residues 1759–1779 (FAADFVLGHVILIFQLPVICI). Residues 1780 to 1821 (PKIDKFHSIMLFWLKPSRQIRPPIYSLKQARLRKRMVRRYCS) are Cytoplasmic-facing. The chain crosses the membrane as a helical span at residues 1822–1842 (LYFLVLIIFAGCIVGPAVASA). At 1843–1895 (HVPKDLGSGLTGTFHNLVQPRNVSNNDTGSQMSTYKSHYYTHTPSLKTWSTIK) the chain is on the extracellular side.

Belongs to the glycosyltransferase 48 family. As to quaternary structure, component of the 1,3-beta-glucan synthase (GS) complex, composed of two alternate catalytic subunits FKS1 or GSC2, and a regulatory subunit RHO1. Interacts with SMK1.

It is found in the membrane. It carries out the reaction [(1-&gt;3)-beta-D-glucosyl](n) + UDP-alpha-D-glucose = [(1-&gt;3)-beta-D-glucosyl](n+1) + UDP + H(+). Functionally, alternate catalytic subunit of the 1,3-beta-glucan synthase (GS) complex. Synthesizes 1,3-beta-glucan, a major structural component of the yeast cell wall. Required for spore wall assembly. Negative regulation of activity by SMK1 is important for spore wall deposition. Activity is positively regulated by RHO1. This is 1,3-beta-glucan synthase component GSC2 from Saccharomyces cerevisiae (strain ATCC 204508 / S288c) (Baker's yeast).